A 91-amino-acid polypeptide reads, in one-letter code: Large ribosomal subunit protein bL27 (91 aa).

The disordered stretch occupies residues 1-21; that stretch reads MAHKKSGGSSRNGRDSAGRRL.

Belongs to the bacterial ribosomal protein bL27 family.

In Phenylobacterium zucineum (strain HLK1), this protein is Large ribosomal subunit protein bL27.